We begin with the raw amino-acid sequence, 151 residues long: Ribosome maturation factor RimP (151 aa).

This sequence belongs to the RimP family.

It localises to the cytoplasm. Required for maturation of 30S ribosomal subunits. This is Ribosome maturation factor RimP from Shewanella baltica (strain OS223).